Consider the following 342-residue polypeptide: Subtilisin-like serine protease Rho m 2.0101 (342 aa).

A propeptide spans 1-30 (removed in mature form); sequence TMELLEDLIEQVRQLPMVNFIEKNSLVHAN. The region spanning 1-30 is the Inhibitor I9 domain; the sequence is TMELLEDLIEQVRQLPMVNFIEKNSLVHAN. In terms of domain architecture, Peptidase S8 spans 39–342; that stretch reads PWGLARISHR…GQNLTKFWGH (304 aa). Active-site charge relay system residues include D75 and H107. N-linked (GlcNAc...) asparagine glycans are attached at residues N137 and N171. S267 serves as the catalytic Charge relay system. N335 carries an N-linked (GlcNAc...) asparagine glycan.

This sequence belongs to the peptidase S8 family.

Functionally, serine protease. This Rhodotorula mucilaginosa (Yeast) protein is Subtilisin-like serine protease Rho m 2.0101.